The following is a 340-amino-acid chain: MTVNVAVLGAGSWGTILANLLVENGHHVELWGNDPEKVAEINEQHTNKHYLPEFKIDSRLHATLDLNEAFEAVDVVLFVIPTQVIRLVAEQIAPVLEAKGVKPVIVTASKGLEQGSHKRISEVLTETIPADIRNGIVVLSGPSHAEDVAMKDITTLTAASTDLVQAQWIQEIFMNDYFRLYTNTDVIGVEMGAALKNVIALGAGALHGLGYGDNTKAALMTRGLAEISRLGVAMGANPLTFIGLSGVGDLIVTGTSVHSRNWRTGNALGEGQKLDDVLENMGMVVEGVATCKAAYELAQQRSVDMPITNAIYNVLYRGCDIRTEIGNLMQRSGKPEIDFK.

Residues Ser12, Trp13, and Lys110 each contribute to the NADPH site. 3 residues coordinate sn-glycerol 3-phosphate: Lys110, Gly141, and Ser143. Residue Ala145 coordinates NADPH. Positions 196, 249, 259, 260, and 261 each coordinate sn-glycerol 3-phosphate. The active-site Proton acceptor is the Lys196. Arg260 is an NADPH binding site. 2 residues coordinate NADPH: Val284 and Glu286.

Belongs to the NAD-dependent glycerol-3-phosphate dehydrogenase family.

It localises to the cytoplasm. It carries out the reaction sn-glycerol 3-phosphate + NAD(+) = dihydroxyacetone phosphate + NADH + H(+). It catalyses the reaction sn-glycerol 3-phosphate + NADP(+) = dihydroxyacetone phosphate + NADPH + H(+). Its pathway is membrane lipid metabolism; glycerophospholipid metabolism. In terms of biological role, catalyzes the reduction of the glycolytic intermediate dihydroxyacetone phosphate (DHAP) to sn-glycerol 3-phosphate (G3P), the key precursor for phospholipid synthesis. This is Glycerol-3-phosphate dehydrogenase [NAD(P)+] from Latilactobacillus sakei subsp. sakei (strain 23K) (Lactobacillus sakei subsp. sakei).